The following is a 651-amino-acid chain: Acetyl-coenzyme A synthetase (651 aa).

CoA contacts are provided by residues 190 to 193 (RGGR), threonine 309, and asparagine 333. Residues 385 to 387 (GEP), 409 to 414 (DTWWQT), aspartate 498, and arginine 513 contribute to the ATP site. Serine 521 is a binding site for CoA. Residue arginine 524 coordinates ATP. Valine 535, histidine 537, and valine 540 together coordinate Mg(2+). Arginine 582 contributes to the CoA binding site. At lysine 607 the chain carries N6-acetyllysine.

The protein belongs to the ATP-dependent AMP-binding enzyme family. The cofactor is Mg(2+). In terms of processing, acetylated. Deacetylation by the SIR2-homolog deacetylase activates the enzyme.

It catalyses the reaction acetate + ATP + CoA = acetyl-CoA + AMP + diphosphate. Functionally, catalyzes the conversion of acetate into acetyl-CoA (AcCoA), an essential intermediate at the junction of anabolic and catabolic pathways. AcsA undergoes a two-step reaction. In the first half reaction, AcsA combines acetate with ATP to form acetyl-adenylate (AcAMP) intermediate. In the second half reaction, it can then transfer the acetyl group from AcAMP to the sulfhydryl group of CoA, forming the product AcCoA. The chain is Acetyl-coenzyme A synthetase from Xanthobacter autotrophicus (strain ATCC BAA-1158 / Py2).